The sequence spans 378 residues: Acetylornithine deacetylase (378 aa).

His76 serves as a coordination point for Zn(2+). The active site involves Asp78. Asp108 contacts Zn(2+). Residue Glu140 is part of the active site. 3 residues coordinate Zn(2+): Glu141, Glu165, and His351.

Belongs to the peptidase M20A family. ArgE subfamily. As to quaternary structure, homodimer. Requires Zn(2+) as cofactor. It depends on Co(2+) as a cofactor. Glutathione serves as cofactor.

The protein resides in the cytoplasm. The catalysed reaction is N(2)-acetyl-L-ornithine + H2O = L-ornithine + acetate. Its pathway is amino-acid biosynthesis; L-arginine biosynthesis; L-ornithine from N(2)-acetyl-L-ornithine (linear): step 1/1. Functionally, catalyzes the hydrolysis of the amide bond of N(2)-acetylated L-amino acids. Cleaves the acetyl group from N-acetyl-L-ornithine to form L-ornithine, an intermediate in L-arginine biosynthesis pathway, and a branchpoint in the synthesis of polyamines. The polypeptide is Acetylornithine deacetylase (Vibrio cholerae serotype O1 (strain ATCC 39541 / Classical Ogawa 395 / O395)).